The sequence spans 227 residues: Phosphoribosylformylglycinamidine synthase subunit PurQ (227 aa).

Residues 3–225 form the Glutamine amidotransferase type-1 domain; the sequence is FAVIVFPGSN…VKQGAHHVKT (223 aa). The active-site Nucleophile is Cys-86. Catalysis depends on residues His-194 and Glu-196.

In terms of assembly, part of the FGAM synthase complex composed of 1 PurL, 1 PurQ and 2 PurS subunits.

The protein localises to the cytoplasm. It catalyses the reaction N(2)-formyl-N(1)-(5-phospho-beta-D-ribosyl)glycinamide + L-glutamine + ATP + H2O = 2-formamido-N(1)-(5-O-phospho-beta-D-ribosyl)acetamidine + L-glutamate + ADP + phosphate + H(+). The catalysed reaction is L-glutamine + H2O = L-glutamate + NH4(+). It participates in purine metabolism; IMP biosynthesis via de novo pathway; 5-amino-1-(5-phospho-D-ribosyl)imidazole from N(2)-formyl-N(1)-(5-phospho-D-ribosyl)glycinamide: step 1/2. Part of the phosphoribosylformylglycinamidine synthase complex involved in the purines biosynthetic pathway. Catalyzes the ATP-dependent conversion of formylglycinamide ribonucleotide (FGAR) and glutamine to yield formylglycinamidine ribonucleotide (FGAM) and glutamate. The FGAM synthase complex is composed of three subunits. PurQ produces an ammonia molecule by converting glutamine to glutamate. PurL transfers the ammonia molecule to FGAR to form FGAM in an ATP-dependent manner. PurS interacts with PurQ and PurL and is thought to assist in the transfer of the ammonia molecule from PurQ to PurL. This is Phosphoribosylformylglycinamidine synthase subunit PurQ from Exiguobacterium sibiricum (strain DSM 17290 / CCUG 55495 / CIP 109462 / JCM 13490 / 255-15).